We begin with the raw amino-acid sequence, 83 residues long: Small ribosomal subunit protein uS15c (83 aa).

Belongs to the universal ribosomal protein uS15 family. Part of the 30S ribosomal subunit.

The protein resides in the plastid. It is found in the chloroplast. The chain is Small ribosomal subunit protein uS15c (rps15) from Fagopyrum esculentum subsp. ancestrale (Wild buckwheat).